Here is a 198-residue protein sequence, read N- to C-terminus: Recombination protein RecR (198 aa).

Residues 57 to 72 (CSVCGHITDQDPCYIC) form a C4-type zinc finger. Residues 80–175 (SVICVVQDPK…KLSRIAHGLP (96 aa)) enclose the Toprim domain.

The protein belongs to the RecR family.

Its function is as follows. May play a role in DNA repair. It seems to be involved in an RecBC-independent recombinational process of DNA repair. It may act with RecF and RecO. This is Recombination protein RecR from Bacillus licheniformis (strain ATCC 14580 / DSM 13 / JCM 2505 / CCUG 7422 / NBRC 12200 / NCIMB 9375 / NCTC 10341 / NRRL NRS-1264 / Gibson 46).